The chain runs to 384 residues: S-adenosylmethionine synthase (384 aa).

Residue histidine 15 coordinates ATP. Aspartate 17 is a Mg(2+) binding site. Glutamate 43 contacts K(+). The L-methionine site is built by glutamate 56 and glutamine 99. Residues 99-109 (QSPDINQGVDR) form a flexible loop region. ATP is bound by residues 164 to 166 (DAK), 230 to 231 (RF), aspartate 239, 245 to 246 (RK), alanine 262, and lysine 266. Position 239 (aspartate 239) interacts with L-methionine. An L-methionine-binding site is contributed by lysine 270.

Belongs to the AdoMet synthase family. Homotetramer; dimer of dimers. The cofactor is Mg(2+). K(+) is required as a cofactor.

It is found in the cytoplasm. It catalyses the reaction L-methionine + ATP + H2O = S-adenosyl-L-methionine + phosphate + diphosphate. The protein operates within amino-acid biosynthesis; S-adenosyl-L-methionine biosynthesis; S-adenosyl-L-methionine from L-methionine: step 1/1. Functionally, catalyzes the formation of S-adenosylmethionine (AdoMet) from methionine and ATP. The overall synthetic reaction is composed of two sequential steps, AdoMet formation and the subsequent tripolyphosphate hydrolysis which occurs prior to release of AdoMet from the enzyme. The chain is S-adenosylmethionine synthase from Erwinia tasmaniensis (strain DSM 17950 / CFBP 7177 / CIP 109463 / NCPPB 4357 / Et1/99).